The following is a 968-amino-acid chain: Isoleucine--tRNA ligase (968 aa).

Positions 68-78 (PYANGALHMGH) match the 'HIGH' region motif. Glutamate 584 provides a ligand contact to L-isoleucyl-5'-AMP. The short motif at 625-629 (KMSKS) is the 'KMSKS' region element. Lysine 628 serves as a coordination point for ATP. Positions 938, 941, 958, and 961 each coordinate Zn(2+).

It belongs to the class-I aminoacyl-tRNA synthetase family. IleS type 1 subfamily. Monomer. It depends on Zn(2+) as a cofactor.

The protein localises to the cytoplasm. The enzyme catalyses tRNA(Ile) + L-isoleucine + ATP = L-isoleucyl-tRNA(Ile) + AMP + diphosphate. Functionally, catalyzes the attachment of isoleucine to tRNA(Ile). As IleRS can inadvertently accommodate and process structurally similar amino acids such as valine, to avoid such errors it has two additional distinct tRNA(Ile)-dependent editing activities. One activity is designated as 'pretransfer' editing and involves the hydrolysis of activated Val-AMP. The other activity is designated 'posttransfer' editing and involves deacylation of mischarged Val-tRNA(Ile). This chain is Isoleucine--tRNA ligase, found in Synechococcus sp. (strain CC9311).